Consider the following 172-residue polypeptide: Photosystem I assembly protein Ycf3 (172 aa).

3 TPR repeats span residues 35-68, 72-105, and 120-153; these read AFSY…EEDP, SYIL…NSQL, and GVKA…SPNN.

Belongs to the Ycf3 family.

Its subcellular location is the plastid. The protein localises to the chloroplast thylakoid membrane. Its function is as follows. Essential for the assembly of the photosystem I (PSI) complex. May act as a chaperone-like factor to guide the assembly of the PSI subunits. This is Photosystem I assembly protein Ycf3 from Guillardia theta (Cryptophyte).